Consider the following 4306-residue polypeptide: Cytoplasmic dynein 2 heavy chain 1 (4306 aa).

Residues 1 to 1650 (MAGSLGDVRK…YVQMVDSELQ (1650 aa)) are stem. Residue 145–152 (LGIVLRKS) coordinates ATP. Positions 669–696 (KELEGYIQKLQNAAERLATENRRLRKWH) form a coiled coil. 4 AAA regions span residues 1651–1875 (YTYE…VLRG), 1941–2161 (SALK…KQND), 2249–2505 (LTAD…WVLG), and 2617–2862 (HYGR…ESCK). ATP contacts are provided by residues 1689–1696 (GPAGTGKT), 1979–1986 (GPSGAGKS), 2291–2298 (GPEGCGKG), and 2655–2662 (GRSGVGRR). The stalk stretch occupies residues 2880 to 3168 (AISSSKKKEL…AEVSKAQETI (289 aa)). Coiled coils occupy residues 2896-2981 (LQAG…KEVQ), 3108-3199 (LETE…LATL), and 3407-3441 (IQHE…SLLE). AAA regions lie at residues 3243 to 3472 (LCTE…LIQD) and 3689 to 3904 (MALF…VIDR).

It belongs to the dynein heavy chain family. In terms of assembly, the cytoplasmic dynein complex 2 is probably composed by a heavy chain DYNC2H1 homodimer and a number of DYNC2LI1 light intermediate chains. Detected in brain, lung, spleen and kidney (at protein level). Enriched in the ependymal layer lining the lateral ventricles (at protein level).

Its subcellular location is the cytoplasm. The protein resides in the cytoskeleton. It is found in the cilium axoneme. It localises to the cell membrane. In terms of biological role, may function as a motor for intraflagellar retrograde transport. Functions in cilia biogenesis. According to PubMed:8666668, it may play a role in transport between endoplasmic reticulum and Golgi or organization of the Golgi in cells. The polypeptide is Cytoplasmic dynein 2 heavy chain 1 (Dync2h1) (Mus musculus (Mouse)).